A 257-amino-acid chain; its full sequence is Short chain dehydrogenase prhI (257 aa).

Residues His-7–Ser-29 traverse the membrane as a helical segment. Ile-11 is a binding site for NADP(+). N-linked (GlcNAc...) asparagine glycosylation occurs at Asn-50. Asp-57 contacts NADP(+). N-linked (GlcNAc...) asparagine glycans are attached at residues Asn-92 and Asn-110. Residues Arg-119, Tyr-151, Lys-155, and Val-184 each coordinate NADP(+). Tyr-151 serves as the catalytic Proton acceptor. The Lowers pKa of active site Tyr role is filled by Lys-155.

This sequence belongs to the short-chain dehydrogenases/reductases (SDR) family.

It is found in the membrane. It catalyses the reaction protoaustinoid A + A = protoaustinoid B + AH2. The protein operates within secondary metabolite biosynthesis; terpenoid biosynthesis. In terms of biological role, short chain dehydrogenase; part of the gene cluster that mediates the biosynthesis of paraherquonin, a meroterpenoid with a unique, highly congested hexacyclic molecular architecture. The first step of the pathway is the synthesis of 3,5-dimethylorsellinic acid (DMOA) by the polyketide synthase prhL. Synthesis of DMOA is followed by farnesylation by the prenyltransferase prhE, methylesterification by the methyl-transferase prhM, epoxidation of the prenyl chain by the flavin-dependent monooxygenase prhF, and cyclization of the farnesyl moiety by the terpene cyclase prhH, to yield the tetracyclic intermediate, protoaustinoid A. The short chain dehydrogenase prhI then oxidizes the C-3 alcohol group of the terpene cyclase product to transform protoaustinoid A into protoaustinoid B. The FAD-binding monooxygenase prhJ catalyzes the oxidation of protoaustinoid B into preaustinoid A which is further oxidized into preaustinoid A1 by FAD-binding monooxygenase phrK. Finally, prhA leads to berkeleydione via the berkeleyone B intermediate. PrhA is a multifunctional dioxygenase that first desaturates at C5-C6 to form berkeleyone B, followed by rearrangement of the A/B-ring to form the cycloheptadiene moiety in berkeleydione. Berkeleydione serves as the key intermediate for the biosynthesis of paraherquonin as well as many other meroterpenoids. The cytochrome P450 monooxygenases prhB, prhD, and prhN, as well as the isomerase prhC, are probably involved in the late stage of paraherquonin biosynthesis, after the production of berkeleydione. Especially prhC might be a multifunctional enzyme that catalyzes the D-ring expansion via intramolecular methoxy rearrangement, as well as the hydrolysis of the expanded D-ring. The chain is Short chain dehydrogenase prhI from Penicillium brasilianum.